The primary structure comprises 2998 residues: MTNNTNLSSYKLAKPNENEDDIAIIGIGFRLPSGDLSKSNDSTKELWNNLMNGFDGVVKTTERWSDNFNELGEISNGNAGLLPLDEWKSFDPLFFGINPSEVSTIDPQQRLLLKCTWEALEDSNIDPIKIRGSKTSVFIGCTSVDYKDISKNPNSTQTNVFGSALSTIANRISHCFDFSGESITIDTACSSSLNAIRLGYQSIKSGFSNLSIVGGVNSLFETNSSKSFSYLNMLSKSQGKCMTFDESADGFVRGEGVALLVLKSLKQSVADGNNIYCVIKGASSNVDGNGLKDKQNFYSPSSISQADNVNNAFSSTNGTVKLEDIVYIEAHGTGTPTGDPVELDGMSRVFKTHSSNNSTLSQQPLLIGSIKSSIGHLEAASGSASLVKCCLMFKNKYLTPNINFKNPNPSIKFDEWNLKVVTEPIHFKDLQKTDNFSMILNNFGITGSNCCLILSEYKGNNKNNNNKNSCTHSEDLKNLQTQKQYLVPFSANSVQSLKQYESVVNDYLFKKSNDFKEFVKQQIFSKSSSLYQRCVVTASNWNEFSENIESTNKIQTSNTQSSNMSKVQNNPITVFVFAGQGSQYNTMSLELYNNEPIFKKSMDLLDDELLKYYEYSVLNKFRSIIDDGDRSIQHPTIAQPIVCMLTISLFELYKHWGIEASFIVGHSLGEIPAAYCSGMITLDTLCYLIYHRSLAQIETHCNGGRMLSIGISSEDYLSSNYSTKYPDIEIACYNSPNSIVLGGNEQQLNQISNELKDKGIFSTMLASLSSFHTSNQKITKDQILNLNINHQSPTIPIFSTVTTNLYESSTTPFNSEYVYNNIIKPVKFSQTISNLYKHIEINKLGNEIVFIELAPHPTLQFYLKQMIPVSSLSTTEETNFKVSIYSALHKKKNDIQEIQKTIAKLYCDNRYNINFKSQFKDEQIINNNNNQEIILPNYQWDDKKYWKEDLVQQKHKFQGPPIDQLGFSLIESSPNVKSYQTFIDISKKPFKYLKGHIVNGKYYFPGCGYIDNLLKLYPSQDLTIGSMEFKSPLILIDGINQCLQTNIFQTGKTEFKVQFHFKDNKSNEWVQSSNGNFQLFTSGNNVNKKYNIQELINNKCNLTKLTKNELYQNIKSKTGLSYNGEFQTVSECYLGDDCSLAVIPIKPSSSTLFTPSVLDSCLHSSVGLVDEQCQLVFEKVEGFKYYSSNIPSFLELSSDKEIKLYSYSYSFKRIGDSFSSSIIVMFEDGRILIEMNKLVCKSLTIIKDSSIIQPPLNDLYSTYNQLIDSPIPSPSKFTQQLDEPDRMNEKVKNYDISILKNFISNQLYSNIVKRCPQLNIEIIKSMDIIQLLEKYLNDDKHSKLFKSIFETLKDSVIDVNNVDDHQHYYNENNIEHYEILLKSTKIVAKLLFPLIDDDPSNDTPQSLFDNGMLDNFYSNYHILKIHNQVIANIISESILPNLNEKMVFRILEFGGGVASLSLIVLNKINELLIEFPNSEIDIEYTWSDISPSFIPDAKSKFSHINQNIHIIYKPLNLEKQLITEQMLKPSYYDFVIMSNVLHVVKQLKPPINQIYEILKPNGQLVFVEPIYKSILLDNIFGVFDQWWCFTDLTIRKDRCCMPKESWNNLLLDCSFNEVKVIMSIEIPSFYVIHTQKPSIYSNLNNIETITQINDDNNNNIIIYGDNELSLFKEVSTTTISNVQQFNELIKKSIITDKSIVYFTKAINQLTIDNFKFVTLEYIQINQILLSNNLKCKNVLITLNSDNINYLSASVIGAARYFEVFPQLNLFSLDFDQKSINNKELNNTIQLLLDSNKFIQKEFKIRDNKVYYERYKRNSNLNKTFVISESFVNDINQLYAKLSPNLEFILDSKKSLKENQLEVHVKATGINYKDYLLYCGLLPPEMVSHNNDINDPEFGLEFSGIVSAIGSNINDFKIGDQIYGIGYDTTSTHIIVDYNQIYHKPTNINHIEAASIPGVYLTSYHSIFNVGNLKIKRNESILIHSGSGGIGLSALNILKWKGHKSHIFVTVGSKEKEQYLINTYGDFITGIYSTMNKDYSEEIKLKLKQLKSDKHGVDLILNTLSSDYMDSNFKCLNIGGRIVDLSITHLNPNEYINNNNFKYNFGYHNVELLFIEKTLIQRMLKKITRAIENHELNLMPITEFSNSTIKVAIEYINKRKHIGKIVVNNDINILSDLIDVHKNQINSNFSILKTNYKINSNNQDHLGSTILVTGQSGIILEILKWIVKFSENVKNIIVLSKSSMKWGLELLIKKNKHINFHFKSVDVSNSISVDNAIDQILNGNSKTITNIDSIFHFAFEFTFCGVNEIDMKSLEISHGAKTMGAINLHNQSIKRNWKLKQFILSSSVASIIGSVDQCSYVCSNRVLDSLSRYRKSIGLPSICTNYGSVQSAGLVSRNESIAQLLDGQGLYPLPINMILGLLDSQIQNVFQSTNLIVSPFNFKTLFEHYKKHPMIHKFDFITNLIENNELTNNKKIENDTSIDSLFLNKLSELLSIEVSKINQDLRLLEYGADSLLTVQLKNWIDKEIYSSLITIQQLQSNTISSSIKLITNQLKLKIGDGQQQQHRQNKKNNNIPENKTIESEEFWKNEIKLDDDEFNLISSNSIRNQIEIKEFKENELRIFLTGSTGFLGAYLLWYLIQMECCSVVYCLLRNKSKSSNPVDEILNNLKHHQLYYKQLNEKHLSKIIPIVGDLTKKKFGLSDYNYSLISNNTNLLLNSGADINLRANYYECKQVNVNSLKEIIKLSLFGKPTQQQHHQPKPILTISTFSVFYNQEFNGSIATPKLETINNLPTGYMQSKVISEFLLTEASSRFKIPSIIFRAPSIFSNPDTGIGHYGDITQLMLQSSFKLGYFPSDKEVDINLLCSPVNWVADNIIKIMFNDNFKDSSDSSLKIYNVYGEVINSVKILQVLKNEKGGNCKEVNFKQWKRMVMDSNEKVCIKLRTFHTLDFDQKYNFEKAYGISKEQISFLQSIGSYGNGGENNLIQMIFNHILAKYSK.

The Ketosynthase family 3 (KS3) domain occupies 19–456 (EDDIAIIGIG…GSNCCLILSE (438 aa)). Active-site for beta-ketoacyl synthase activity residues include C189, H331, and H376. An acyl/malonyl transferase region spans residues 657–690 (GIEASFIVGHSLGEIPAAYCSGMITLDTLCYLIY). The active-site For acyl/malonyl transferase activity is the S667. The N-terminal hotdog fold stretch occupies residues 962–1084 (IDQLGFSLIE…GNFQLFTSGN (123 aa)). Residues 962-1249 (IDQLGFSLIE…CKSLTIIKDS (288 aa)) enclose the PKS/mFAS DH domain. Residue H996 is the Proton acceptor; for dehydratase activity of the active site. Residues 1101 to 1249 (NLTKLTKNEL…CKSLTIIKDS (149 aa)) form a C-terminal hotdog fold region. The active-site Proton donor; for dehydratase activity is the D1159. Residues 1979–1999 (SILIHSGSGGIGLSALNILKW) form a helical membrane-spanning segment. Positions 2476 to 2553 (ENDTSIDSLF…SSIKLITNQL (78 aa)) constitute a Carrier domain. S2513 is modified (O-(pantetheine 4'-phosphoryl)serine). Residues 2559 to 2578 (DGQQQQHRQNKKNNNIPENK) are disordered. Over residues 2561-2573 (QQQQHRQNKKNNN) the composition is skewed to low complexity. Residues 2621–2641 (IFLTGSTGFLGAYLLWYLIQM) form a helical membrane-spanning segment.

The cofactor is pantetheine 4'-phosphate.

It localises to the membrane. Functionally, probable polyketide synthase. The sequence is that of Probable polyketide synthase 14 (pks14) from Dictyostelium discoideum (Social amoeba).